The chain runs to 275 residues: NH(3)-dependent NAD(+) synthetase (275 aa).

46–53 lines the ATP pocket; sequence GISGGQDS. Asp52 contributes to the Mg(2+) binding site. Arg140 provides a ligand contact to deamido-NAD(+). ATP is bound at residue Thr160. Glu165 contributes to the Mg(2+) binding site. Positions 173 and 180 each coordinate deamido-NAD(+). The ATP site is built by Lys189 and Thr211. 260 to 261 serves as a coordination point for deamido-NAD(+); sequence HK.

Belongs to the NAD synthetase family. Homodimer.

It carries out the reaction deamido-NAD(+) + NH4(+) + ATP = AMP + diphosphate + NAD(+) + H(+). It functions in the pathway cofactor biosynthesis; NAD(+) biosynthesis; NAD(+) from deamido-NAD(+) (ammonia route): step 1/1. Functionally, catalyzes the ATP-dependent amidation of deamido-NAD to form NAD. Uses ammonia as a nitrogen source. The sequence is that of NH(3)-dependent NAD(+) synthetase from Salmonella dublin (strain CT_02021853).